We begin with the raw amino-acid sequence, 353 residues long: Photosystem II D2 protein (353 aa).

Threonine 2 carries the post-translational modification N-acetylthreonine. Threonine 2 carries the phosphothreonine modification. A helical membrane pass occupies residues 41–61 (CAYFALGGWFTGTTFVTSWYT). Histidine 118 serves as a coordination point for chlorophyll a. Residues 125–141 (GFMLRQFELARSVQLRP) form a helical membrane-spanning segment. Pheophytin a is bound by residues glutamine 130 and asparagine 143. The helical transmembrane segment at 153 to 166 (VFVSVFLIYPLGQS) threads the bilayer. Residue histidine 198 coordinates chlorophyll a. A helical transmembrane segment spans residues 208-228 (AALLCAIHGATVENTLFEDGD). 2 residues coordinate a plastoquinone: histidine 215 and phenylalanine 262. Histidine 215 is a Fe cation binding site. Histidine 269 is a Fe cation binding site. A helical transmembrane segment spans residues 279-295 (GLWMSALGVVGLALNLR).

The protein belongs to the reaction center PufL/M/PsbA/D family. As to quaternary structure, PSII is composed of 1 copy each of membrane proteins PsbA, PsbB, PsbC, PsbD, PsbE, PsbF, PsbH, PsbI, PsbJ, PsbK, PsbL, PsbM, PsbT, PsbX, PsbY, PsbZ, Psb30/Ycf12, at least 3 peripheral proteins of the oxygen-evolving complex and a large number of cofactors. It forms dimeric complexes. The cofactor is The D1/D2 heterodimer binds P680, chlorophylls that are the primary electron donor of PSII, and subsequent electron acceptors. It shares a non-heme iron and each subunit binds pheophytin, quinone, additional chlorophylls, carotenoids and lipids. There is also a Cl(-1) ion associated with D1 and D2, which is required for oxygen evolution. The PSII complex binds additional chlorophylls, carotenoids and specific lipids..

It is found in the plastid. The protein localises to the chloroplast thylakoid membrane. The enzyme catalyses 2 a plastoquinone + 4 hnu + 2 H2O = 2 a plastoquinol + O2. Functionally, photosystem II (PSII) is a light-driven water:plastoquinone oxidoreductase that uses light energy to abstract electrons from H(2)O, generating O(2) and a proton gradient subsequently used for ATP formation. It consists of a core antenna complex that captures photons, and an electron transfer chain that converts photonic excitation into a charge separation. The D1/D2 (PsbA/PsbD) reaction center heterodimer binds P680, the primary electron donor of PSII as well as several subsequent electron acceptors. D2 is needed for assembly of a stable PSII complex. The chain is Photosystem II D2 protein from Dioscorea elephantipes (Elephant's foot yam).